The sequence spans 1412 residues: Cardiac-enriched FHL2-interacting protein (1412 aa).

7 disordered regions span residues 106–177 (VQGE…PKFA), 202–443 (VSNT…YNPP), 460–500 (LETS…SKAP), 517–848 (YSPL…TNKH), 877–923 (SEDS…VPGT), 935–1255 (EDPV…YPAT), and 1344–1412 (RQGS…EGVS). The residue at position 120 (threonine 120) is a Phosphothreonine. A compositionally biased stretch (low complexity) spans 135-145 (SSSKPISKVSS). Positions 161 to 171 (RPPPSKPPALK) are enriched in pro residues. Polar residues predominate over residues 202 to 212 (VSNTHQGSHQS). 2 stretches are compositionally biased toward basic and acidic residues: residues 285–299 (WDTH…KDIA) and 306–316 (KAPKHYEDMPL). Serine 328 carries the phosphoserine modification. Residues 343 to 352 (SPSGSQSTSG) are compositionally biased toward polar residues. Basic residues predominate over residues 378-389 (KRSKAPWRKPKT). At serine 473 the chain carries Phosphoserine. Basic and acidic residues-rich tracts occupy residues 482–496 (QEKE…DSYK) and 525–538 (GFDE…DSKQ). A compositionally biased stretch (low complexity) spans 587-612 (SHPTFSSPSASSQTHFCVNGEAAESN). Residues 632–641 (GHPDCRENLP) are compositionally biased toward basic and acidic residues. 3 stretches are compositionally biased toward polar residues: residues 670 to 679 (NGLSRSVSQE), 687 to 697 (GFQSLPLNQKF), and 712 to 722 (SDSQSDFTPCR). Positions 728 to 741 (FSTSSSDQSFASFE) are enriched in low complexity. The span at 753–799 (QEDRKSHVSAGDKQRDETAVEKEESQQCASRNEHRGVDEQRQEEIQR) shows a compositional bias: basic and acidic residues. Position 813 is a phosphoserine (serine 813). Positions 826–837 (ADKDTAHTHAKD) are enriched in basic and acidic residues. Polar residues-rich tracts occupy residues 904–921 (ASES…NDVP), 943–953 (QDETSQQTRKG), and 1047–1066 (AETS…SPAA). Basic residues predominate over residues 1164–1175 (RRAKKLASKRRK). The segment covering 1176–1203 (SDQLLEKHTEAWEGKSFTEDTQGTERRP) has biased composition (basic and acidic residues). Residues 1401 to 1412 (DDLEDFATEGVS) are compositionally biased toward acidic residues.

In terms of assembly, interacts with FHL2. In terms of tissue distribution, expressed in the heart and skeletal muscle (at protein level).

Its subcellular location is the cytoplasm. It localises to the myofibril. It is found in the sarcomere. The protein localises to the z line. Functionally, plays an important role in cardiomyocyte hypertrophy via activation of the calcineurin/NFAT signaling pathway. In Mus musculus (Mouse), this protein is Cardiac-enriched FHL2-interacting protein.